A 561-amino-acid polypeptide reads, in one-letter code: Transcription factor Clamp (561 aa).

The C2H2-type 1 zinc-finger motif lies at 127–149; sequence FKCDVCSDMFPHLALLNAHKRMH. 4 residues coordinate Zn(2+): Cys-129, Cys-132, His-145, and His-149. Residues 290-315 form a disordered region; it reads TGGTTPKREASSGSGHHPVKKRNSQQ. C2H2-type zinc fingers lie at residues 360–382, 388–410, 416–438, 444–466, 472–494, and 500–522; these read FSCN…KKLH, YKCS…ARIH, YKCQ…ERTH, YVCG…RRIH, YKCE…AKVH, and YKCE…RGIH.

As to quaternary structure, homodimer. Interacts with msl-2; promoting recruitment of the male-specific lethal (MSL) histone acetyltransferase complex to chromatin. Interacts with Nelf-A. Interacts with NELF-B.

It localises to the nucleus. The protein localises to the chromosome. Transcription factor involved in X-chromosome dosage compensation in males, the process by which transcription of the single X chromosome in the male is elevated. Binds to the DNA sequence (GA)n. Clamp-binding promotes nucleosome depletion and chromatin accessibility, thereby allowing access to other transcription factors. Specifically binds to cis-acting elements on the X-chromosome named chromatin entry sites and promotes recruitment of the male-specific lethal (MSL) histone acetyltransferase complex, which associates with actively transcribed genes on the male X-chromosome to upregulate their expression. Mechanistically, acts by promoting chromatin accessibility at chromatin entry sites, facilitating DNA-binding of msl-2, followed by MSL complex recruitment. In addition to dosage compensation, also involved in zygotic genome activation (ZGA), a critical event in early embryonic development during which the developmental control passes from maternally provided mRNAs to the expression of the zygotic genome after fertilization. Maternally-provided protein cooperates with Zelda (zld) to activate zygotic transcription by increasing chromatin accessibility at promoters of specific genes and facilitate zld occupancy at a subset of key embryonic promoters. Also acts as an activator of gypsy chromatin insulator function by promoting binding of Cp190 to chromatin. This is Transcription factor Clamp from Drosophila melanogaster (Fruit fly).